A 406-amino-acid chain; its full sequence is 1-deoxy-D-xylulose 5-phosphate reductoisomerase (406 aa).

T21, G22, S23, I24, G47, Q50, and N127 together coordinate NADPH. K128 provides a ligand contact to 1-deoxy-D-xylulose 5-phosphate. E129 provides a ligand contact to NADPH. D151 is a binding site for Mn(2+). 1-deoxy-D-xylulose 5-phosphate contacts are provided by S152, E153, S177, and H200. Residue E153 participates in Mn(2+) binding. NADPH is bound at residue G206. S213, N218, K219, and E222 together coordinate 1-deoxy-D-xylulose 5-phosphate. E222 is a binding site for Mn(2+).

Belongs to the DXR family. The cofactor is Mg(2+). Mn(2+) serves as cofactor.

It carries out the reaction 2-C-methyl-D-erythritol 4-phosphate + NADP(+) = 1-deoxy-D-xylulose 5-phosphate + NADPH + H(+). It functions in the pathway isoprenoid biosynthesis; isopentenyl diphosphate biosynthesis via DXP pathway; isopentenyl diphosphate from 1-deoxy-D-xylulose 5-phosphate: step 1/6. Functionally, catalyzes the NADPH-dependent rearrangement and reduction of 1-deoxy-D-xylulose-5-phosphate (DXP) to 2-C-methyl-D-erythritol 4-phosphate (MEP). The chain is 1-deoxy-D-xylulose 5-phosphate reductoisomerase from Mycobacterium leprae (strain Br4923).